Reading from the N-terminus, the 564-residue chain is Urease subunit alpha (564 aa).

Residues 126 to 564 (GGIDTHIHFI…LPMAQRYFLF (439 aa)) enclose the Urease domain. Positions 131, 133, and 214 each coordinate Ni(2+). N6-carboxylysine is present on Lys214. Residue His216 coordinates substrate. Residues His243 and His269 each contribute to the Ni(2+) site. The Proton donor role is filled by His317. A Ni(2+)-binding site is contributed by Asp357.

This sequence belongs to the metallo-dependent hydrolases superfamily. Urease alpha subunit family. In terms of assembly, heterotrimer of UreA (gamma), UreB (beta) and UreC (alpha) subunits. Three heterotrimers associate to form the active enzyme. The cofactor is Ni cation. Post-translationally, carboxylation allows a single lysine to coordinate two nickel ions.

It is found in the cytoplasm. The enzyme catalyses urea + 2 H2O + H(+) = hydrogencarbonate + 2 NH4(+). It participates in nitrogen metabolism; urea degradation; CO(2) and NH(3) from urea (urease route): step 1/1. In Burkholderia pseudomallei (strain 1710b), this protein is Urease subunit alpha.